Here is a 359-residue protein sequence, read N- to C-terminus: Bergaptol O-methyltransferase (359 aa).

A bergaptol-binding site is contributed by histidine 126. Serine 179, glycine 203, aspartate 226, aspartate 246, and lysine 260 together coordinate S-adenosyl-L-homocysteine. Histidine 264 lines the bergaptol pocket. Histidine 264 serves as the catalytic Proton acceptor.

It belongs to the class I-like SAM-binding methyltransferase superfamily. Cation-independent O-methyltransferase family. COMT subfamily. Homodimer. Mostly expressed in roots and, to a lower extent, in stems and leaves.

The protein localises to the cytoplasm. It catalyses the reaction bergaptol + S-adenosyl-L-methionine = bergapten + S-adenosyl-L-homocysteine. The protein operates within aromatic compound metabolism. It functions in the pathway secondary metabolite biosynthesis. Its function is as follows. O-methyltransferase involved in the biosynthesis of furocoumarins natural products such as bergapten, a photosensitizer used for medical purpose such as treating psoriasis and vitiligo or facilitating resistance to microbial infection and other stresses. Catalyzes specifically the methylation of bergaptol. Not active on xanthotol, isoscopoletin, scopoletin and esculetin. The sequence is that of Bergaptol O-methyltransferase from Kitagawia praeruptora (Peucedanum praeruptorum).